Reading from the N-terminus, the 341-residue chain is tRNA N6-adenosine threonylcarbamoyltransferase (341 aa).

Residues H111 and H115 each contribute to the Fe cation site. Substrate contacts are provided by residues L134–G138, D167, G180, and N276. Residue D304 coordinates Fe cation.

It belongs to the KAE1 / TsaD family. The cofactor is Fe(2+).

It is found in the cytoplasm. The enzyme catalyses L-threonylcarbamoyladenylate + adenosine(37) in tRNA = N(6)-L-threonylcarbamoyladenosine(37) in tRNA + AMP + H(+). Required for the formation of a threonylcarbamoyl group on adenosine at position 37 (t(6)A37) in tRNAs that read codons beginning with adenine. Is involved in the transfer of the threonylcarbamoyl moiety of threonylcarbamoyl-AMP (TC-AMP) to the N6 group of A37, together with TsaE and TsaB. TsaD likely plays a direct catalytic role in this reaction. In Pseudomonas putida (strain ATCC 47054 / DSM 6125 / CFBP 8728 / NCIMB 11950 / KT2440), this protein is tRNA N6-adenosine threonylcarbamoyltransferase.